We begin with the raw amino-acid sequence, 119 residues long: Membrane-anchored ubiquitin-fold protein 1 (119 aa).

The region spanning 9 to 75 is the Ubiquitin-like domain; that stretch reads FEIKFRLPDG…LENNKTLSEC (67 aa). The residue at position 116 (cysteine 116) is a Cysteine methyl ester. The S-farnesyl cysteine moiety is linked to residue cysteine 116. Positions 117–119 are cleaved as a propeptide — removed in mature form; the sequence is SIM.

Its subcellular location is the cell membrane. In terms of biological role, may serve as docking site to facilitate the association of other proteins to the plasma membrane. The polypeptide is Membrane-anchored ubiquitin-fold protein 1 (MUB1) (Oryza sativa subsp. japonica (Rice)).